The sequence spans 245 residues: tRNA1(Val) (adenine(37)-N6)-methyltransferase (245 aa).

It belongs to the methyltransferase superfamily. tRNA (adenine-N(6)-)-methyltransferase family.

Its subcellular location is the cytoplasm. The enzyme catalyses adenosine(37) in tRNA1(Val) + S-adenosyl-L-methionine = N(6)-methyladenosine(37) in tRNA1(Val) + S-adenosyl-L-homocysteine + H(+). Its function is as follows. Specifically methylates the adenine in position 37 of tRNA(1)(Val) (anticodon cmo5UAC). In Enterobacter sp. (strain 638), this protein is tRNA1(Val) (adenine(37)-N6)-methyltransferase.